The sequence spans 309 residues: Cilia-and flagella-associated protein 96 (309 aa).

The disordered stretch occupies residues 220-249 (EEKKKTISNTFKPSSPGKKPGGMKAGTFDP).

Belongs to the CFAP96 family. Detected in testis and fetal liver.

The protein resides in the cytoplasm. It localises to the cytoskeleton. The protein localises to the microtubule organizing center. It is found in the centrosome. The protein is Cilia-and flagella-associated protein 96 of Homo sapiens (Human).